We begin with the raw amino-acid sequence, 2042 residues long: Cell adhesion molecule DSCAML1 (2042 aa).

Positions 1–17 are cleaved as a signal peptide; that stretch reads MWLVTFFLLYSLRKAHT. Over 18–1592 the chain is Extracellular; the sequence is EDVGTSLYFV…AQGEGDDVKK (1575 aa). N28 and N78 each carry an N-linked (GlcNAc...) asparagine glycan. Ig-like C2-type domains lie at 37–107, 114–216, 227–311, 315–403, 409–502, 507–587, 597–686, 691–785, and 789–886; these read SSTV…AENS, PNIR…ARLS, PTML…GTLT, PLRV…SIIT, PRIV…ARIN, PSIR…LSIS, PPLI…RQLI, PRFV…MFLT, and PAMI…LTVQ. Disulfide bonds link C46–C102, C145–C197, C248–C295, C337–C387, and C430–C486. 9 N-linked (GlcNAc...) asparagine glycosylation sites follow: N369, N472, N514, N557, N667, N711, N750, N797, and N810. 2 disulfides stabilise this stretch: C527/C576 and C618/C670. C712 and C768 form a disulfide bridge. A disulfide bridge connects residues C811 and C868. 4 consecutive Fibronectin type-III domains span residues 888 to 985, 990 to 1089, 1094 to 1190, and 1194 to 1289; these read PPDP…TEEA, PPMD…TLED, PPEN…TKED, and PPAG…AGKA. Residues N927, N1083, N1145, N1163, N1276, and N1346 are each glycosylated (N-linked (GlcNAc...) asparagine). Residues 1279 to 1368 enclose the Ig-like C2-type 10 domain; that stretch reads EKVTIEPAGK…SGYYTCTATN (90 aa). C1312 and C1364 are oxidised to a cystine. Fibronectin type-III domains follow at residues 1384–1478 and 1479–1579; these read PPDQ…THGR and EPSF…TIPP. N-linked (GlcNAc...) asparagine glycans are attached at residues N1493, N1532, and N1562. A helical transmembrane segment spans residues 1593–1613; that stretch reads LFTIACPIILATLGVALLFII. The Cytoplasmic portion of the chain corresponds to 1614–2042; it reads RKKRKEKRLK…GAYSKSYTLV (429 aa). Disordered regions lie at residues 1716–1742, 1781–1805, 1841–1865, and 1940–2042; these read PLID…HSTR, SDSY…TESA, SSDQ…PSEP, and PPAR…YTLV. The span at 1733–1742 shows a compositional bias: basic residues; sequence KSVKSAHSTR. Composition is skewed to polar residues over residues 1781–1790 and 1841–1863; these read SDSYSASLSQ and SSDQ…STPS. Residues 1951 to 1960 show a composition bias toward pro residues; sequence AKPPGLPPPS. A compositionally biased stretch (low complexity) spans 1961–1983; the sequence is SSSSSTTLPQRTLPMPTAASTAP. The span at 1984-1995 shows a compositional bias: pro residues; sequence APAPAPAAPAEP. 2 stretches are compositionally biased toward low complexity: residues 1996 to 2005 and 2023 to 2034; these read PANTTTTTTT and GAGRAQKQGAGA.

Homodimer; mediates homophilic interactions to promote cell adhesion. In terms of tissue distribution, SDK1, SDK2, DSCAM and DSCAML1 are expressed in non-overlapping subsets of interneurons and retinal ganglion cells (RGCs) that form synapses in distinct inner plexiform layer (IPL) sublaminae.

Its subcellular location is the cell membrane. It is found in the synapse. In terms of biological role, cell adhesion molecule that plays a role in neuronal self-avoidance. Promotes repulsion between specific neuronal processes of either the same cell or the same subtype of cells. Adhesion molecule that promotes lamina-specific synaptic connections in the retina: expressed in specific subsets of interneurons and retinal ganglion cells (RGCs) and promotes synaptic connectivity via homophilic interactions. This is Cell adhesion molecule DSCAML1 (DSCAML1) from Gallus gallus (Chicken).